The following is a 464-amino-acid chain: Sulfoacetaldehyde dehydrogenase (acylating) (464 aa).

Residue Cys241 is the Nucleophile of the active site.

It belongs to the aldehyde dehydrogenase family.

The enzyme catalyses sulfoacetaldehyde + NADP(+) + CoA = sulfoacetyl-CoA + NADPH + H(+). Involved in the degradation of sulfoacetate. Catalyzes the conversion of sulfoacetyl-CoA and NADPH to sulfoacetaldehyde, CoA and NADP(+). A much lower level of activity (1%) is observed when NADP(+) is replaced with NAD(+). The sequence is that of Sulfoacetaldehyde dehydrogenase (acylating) from Bilophila wadsworthia (strain 3_1_6).